A 269-amino-acid polypeptide reads, in one-letter code: 4-hydroxy-tetrahydrodipicolinate reductase (269 aa).

NAD(+)-binding positions include 8–13 and E34; that span reads GAAGRM. R35 contributes to the NADP(+) binding site. NAD(+) contacts are provided by residues 98–100 and 122–125; these read GTT and APNY. H155 serves as the catalytic Proton donor/acceptor. H156 is a binding site for (S)-2,3,4,5-tetrahydrodipicolinate. Catalysis depends on K159, which acts as the Proton donor. Residue 165-166 participates in (S)-2,3,4,5-tetrahydrodipicolinate binding; that stretch reads GT.

The protein belongs to the DapB family.

It localises to the cytoplasm. It catalyses the reaction (S)-2,3,4,5-tetrahydrodipicolinate + NAD(+) + H2O = (2S,4S)-4-hydroxy-2,3,4,5-tetrahydrodipicolinate + NADH + H(+). The enzyme catalyses (S)-2,3,4,5-tetrahydrodipicolinate + NADP(+) + H2O = (2S,4S)-4-hydroxy-2,3,4,5-tetrahydrodipicolinate + NADPH + H(+). The protein operates within amino-acid biosynthesis; L-lysine biosynthesis via DAP pathway; (S)-tetrahydrodipicolinate from L-aspartate: step 4/4. In terms of biological role, catalyzes the conversion of 4-hydroxy-tetrahydrodipicolinate (HTPA) to tetrahydrodipicolinate. The protein is 4-hydroxy-tetrahydrodipicolinate reductase of Aliivibrio fischeri (strain ATCC 700601 / ES114) (Vibrio fischeri).